The following is a 384-amino-acid chain: Carbamoyl phosphate synthase small chain (384 aa).

The interval 1–192 is CPSase; that stretch reads MIKKIPAILV…LADRNREKIY (192 aa). Residues Ser51, Gly244, and Gly246 each contribute to the L-glutamine site. Residues 196–382 enclose the Glutamine amidotransferase type-1 domain; it reads KVIVIDFGVK…IEIMKQFRKE (187 aa). Cys272 serves as the catalytic Nucleophile. Met273, Gln276, Asn312, Gly314, and Phe315 together coordinate L-glutamine. Active-site residues include His355 and Glu357.

Belongs to the CarA family. In terms of assembly, composed of two chains; the small (or glutamine) chain promotes the hydrolysis of glutamine to ammonia, which is used by the large (or ammonia) chain to synthesize carbamoyl phosphate. Tetramer of heterodimers (alpha,beta)4.

It localises to the plastid. It is found in the chloroplast. It catalyses the reaction hydrogencarbonate + L-glutamine + 2 ATP + H2O = carbamoyl phosphate + L-glutamate + 2 ADP + phosphate + 2 H(+). It carries out the reaction L-glutamine + H2O = L-glutamate + NH4(+). It participates in amino-acid biosynthesis; L-arginine biosynthesis; carbamoyl phosphate from bicarbonate: step 1/1. It functions in the pathway pyrimidine metabolism; UMP biosynthesis via de novo pathway; (S)-dihydroorotate from bicarbonate: step 1/3. Its function is as follows. Small subunit of the glutamine-dependent carbamoyl phosphate synthetase (CPSase). CPSase catalyzes the formation of carbamoyl phosphate from the ammonia moiety of glutamine, carbonate, and phosphate donated by ATP, constituting the first step of 2 biosynthetic pathways, one leading to arginine and/or urea and the other to pyrimidine nucleotides. The small subunit (glutamine amidotransferase) binds and cleaves glutamine to supply the large subunit with the substrate ammonia. This Porphyra purpurea (Red seaweed) protein is Carbamoyl phosphate synthase small chain.